We begin with the raw amino-acid sequence, 293 residues long: 4-diphosphocytidyl-2-C-methyl-D-erythritol kinase (293 aa).

Lysine 23 is an active-site residue. An ATP-binding site is contributed by 109 to 119 (PVAAGIGGGSA). The active site involves aspartate 151.

The protein belongs to the GHMP kinase family. IspE subfamily.

The enzyme catalyses 4-CDP-2-C-methyl-D-erythritol + ATP = 4-CDP-2-C-methyl-D-erythritol 2-phosphate + ADP + H(+). It functions in the pathway isoprenoid biosynthesis; isopentenyl diphosphate biosynthesis via DXP pathway; isopentenyl diphosphate from 1-deoxy-D-xylulose 5-phosphate: step 3/6. In terms of biological role, catalyzes the phosphorylation of the position 2 hydroxy group of 4-diphosphocytidyl-2C-methyl-D-erythritol. This Rhizorhabdus wittichii (strain DSM 6014 / CCUG 31198 / JCM 15750 / NBRC 105917 / EY 4224 / RW1) (Sphingomonas wittichii) protein is 4-diphosphocytidyl-2-C-methyl-D-erythritol kinase.